Here is a 452-residue protein sequence, read N- to C-terminus: Exoglucanase 1 (452 aa).

An N-terminal signal peptide occupies residues 1 to 18 (MFSKFALTGSLLAGAVNA). N75 is a glycosylation site (N-linked (GlcNAc...) asparagine). The active-site Nucleophile is E230. E235 serves as the catalytic Proton donor. Residues N335 and N360 are each glycosylated (N-linked (GlcNAc...) asparagine).

Belongs to the glycosyl hydrolase 7 (cellulase C) family.

It catalyses the reaction Hydrolysis of (1-&gt;4)-beta-D-glucosidic linkages in cellulose and cellotetraose, releasing cellobiose from the non-reducing ends of the chains.. In terms of biological role, the biological conversion of cellulose to glucose generally requires three types of hydrolytic enzymes: (1) Endoglucanases which cut internal beta-1,4-glucosidic bonds; (2) Exocellobiohydrolases that cut the disaccharide cellobiose from the non-reducing end of the cellulose polymer chain; (3) Beta-1,4-glucosidases which hydrolyze the cellobiose and other short cello-oligosaccharides to glucose. This is Exoglucanase 1 (CBH-1) from Cryphonectria parasitica (Chestnut blight fungus).